The following is a 23-amino-acid chain: 48 kDa cell wall protein (23 aa).

The protein localises to the secreted. It is found in the cell wall. The polypeptide is 48 kDa cell wall protein (Nicotiana tabacum (Common tobacco)).